A 144-amino-acid polypeptide reads, in one-letter code: Large ribosomal subunit protein uL15 (144 aa).

The segment at 1–58 is disordered; the sequence is MHLNTLSPAPGSHKARKRCGRGIGSGIGKTGGRGHKGQKSRSGGSVRPGFEGGQMPLK. Positions 21 to 31 are enriched in gly residues; that stretch reads RGIGSGIGKTG.

It belongs to the universal ribosomal protein uL15 family. In terms of assembly, part of the 50S ribosomal subunit.

Binds to the 23S rRNA. The chain is Large ribosomal subunit protein uL15 from Colwellia psychrerythraea (strain 34H / ATCC BAA-681) (Vibrio psychroerythus).